Consider the following 127-residue polypeptide: Calcitonin gene-related peptide 2 (127 aa).

The first 25 residues, 1–25, serve as a signal peptide directing secretion; it reads MGFRKFSPFLALSILVLYQAGSLQA. The propeptide occupies 26–79; it reads APFRSALESSPDPATLSKEDARLLLAALVQDYVQMKASELKQEQETQGSSSAAQ. Cysteines 83 and 88 form a disulfide. At F118 the chain carries Phenylalanine amide. Positions 124-127 are excised as a propeptide; that stretch reads DLQA.

This sequence belongs to the calcitonin family. Expressed in spinal cord, pituitary and thalamus.

It localises to the secreted. Functionally, CALCB/CGRP2 is a peptide hormone that induces vasodilation mediated by the CALCRL-RAMP1 receptor complex. Dilates a variety of vessels including the coronary, cerebral and systemic vasculature. Its abundance in the CNS also points toward a neurotransmitter or neuromodulator role. The chain is Calcitonin gene-related peptide 2 from Homo sapiens (Human).